The chain runs to 229 residues: Deoxyribose-phosphate aldolase (229 aa).

Catalysis depends on D84, which acts as the Proton donor/acceptor. The active-site Schiff-base intermediate with acetaldehyde is the K146. K188 acts as the Proton donor/acceptor in catalysis.

The protein belongs to the DeoC/FbaB aldolase family. DeoC type 1 subfamily.

The protein localises to the cytoplasm. It catalyses the reaction 2-deoxy-D-ribose 5-phosphate = D-glyceraldehyde 3-phosphate + acetaldehyde. It functions in the pathway carbohydrate degradation; 2-deoxy-D-ribose 1-phosphate degradation; D-glyceraldehyde 3-phosphate and acetaldehyde from 2-deoxy-alpha-D-ribose 1-phosphate: step 2/2. Functionally, catalyzes a reversible aldol reaction between acetaldehyde and D-glyceraldehyde 3-phosphate to generate 2-deoxy-D-ribose 5-phosphate. This is Deoxyribose-phosphate aldolase from Pyrobaculum neutrophilum (strain DSM 2338 / JCM 9278 / NBRC 100436 / V24Sta) (Thermoproteus neutrophilus).